Reading from the N-terminus, the 284-residue chain is Shikimate dehydrogenase (NADP(+)) (284 aa).

Shikimate-binding positions include 20–22 (SIS) and Ser67. Lys71 (proton acceptor) is an active-site residue. Asp83 contributes to the NADP(+) binding site. Shikimate contacts are provided by Asn92 and Asp107. Residues 129–133 (GAGGA) and Ile227 contribute to the NADP(+) site. Position 229 (Tyr229) interacts with shikimate. Gly250 contributes to the NADP(+) binding site.

This sequence belongs to the shikimate dehydrogenase family. In terms of assembly, homodimer.

It carries out the reaction shikimate + NADP(+) = 3-dehydroshikimate + NADPH + H(+). The protein operates within metabolic intermediate biosynthesis; chorismate biosynthesis; chorismate from D-erythrose 4-phosphate and phosphoenolpyruvate: step 4/7. In terms of biological role, involved in the biosynthesis of the chorismate, which leads to the biosynthesis of aromatic amino acids. Catalyzes the reversible NADPH linked reduction of 3-dehydroshikimate (DHSA) to yield shikimate (SA). The polypeptide is Shikimate dehydrogenase (NADP(+)) (Streptococcus pneumoniae (strain CGSP14)).